The primary structure comprises 162 residues: Shikimate kinase (162 aa).

Residue 11 to 16 (GSGKSS) participates in ATP binding. A Mg(2+)-binding site is contributed by S15. Substrate-binding residues include D33, R57, and G80. Residue R116 coordinates ATP. R132 provides a ligand contact to substrate.

Belongs to the shikimate kinase family. In terms of assembly, monomer. Mg(2+) is required as a cofactor.

It localises to the cytoplasm. The enzyme catalyses shikimate + ATP = 3-phosphoshikimate + ADP + H(+). The protein operates within metabolic intermediate biosynthesis; chorismate biosynthesis; chorismate from D-erythrose 4-phosphate and phosphoenolpyruvate: step 5/7. In terms of biological role, catalyzes the specific phosphorylation of the 3-hydroxyl group of shikimic acid using ATP as a cosubstrate. The sequence is that of Shikimate kinase from Helicobacter pylori (strain P12).